The following is a 187-amino-acid chain: UPF0301 protein YqgE (187 aa).

Belongs to the UPF0301 (AlgH) family.

The sequence is that of UPF0301 protein YqgE from Escherichia coli O139:H28 (strain E24377A / ETEC).